The sequence spans 173 residues: MNYFELFSLSPSFELDTAVLSERYRELQRAVHPDKFANASEQDKRLAVQHTAQVNDGYNTLKHPISRAEHMLSLKGIDLSHESTTVKDTMFLMQQMEWREALEEISDCDDPDEAIEHLHQSFGEYRGDITAQLAQKIGSEEASVLEQAADLVRKLKFMDKLQAELERAEDALF.

A J domain is found at 2-74; sequence NYFELFSLSP…ISRAEHMLSL (73 aa).

This sequence belongs to the HscB family. As to quaternary structure, interacts with HscA and stimulates its ATPase activity.

In terms of biological role, co-chaperone involved in the maturation of iron-sulfur cluster-containing proteins. Seems to help targeting proteins to be folded toward HscA. In Shewanella loihica (strain ATCC BAA-1088 / PV-4), this protein is Co-chaperone protein HscB homolog.